We begin with the raw amino-acid sequence, 477 residues long: Lactate utilization protein B (477 aa).

2 4Fe-4S ferredoxin-type domains span residues 304 to 334 and 353 to 382; these read GTEF…GHSY and YDDY…LHEL. Residues Cys-313, Cys-316, Cys-319, Cys-323, Cys-366, Cys-369, and Cys-373 each coordinate [4Fe-4S] cluster. A disordered region spans residues 433–477; that stretch reads KEDGKITKGPGPLKQWTQIRDFPAPNKSRFRDWFEDRRKEKGEDK. Residues 461 to 477 are compositionally biased toward basic and acidic residues; it reads RFRDWFEDRRKEKGEDK.

This sequence belongs to the LutB/YkgF family.

Functionally, is involved in L-lactate degradation and allows cells to grow with lactate as the sole carbon source. Has probably a role as an electron transporter during oxidation of L-lactate. The polypeptide is Lactate utilization protein B (Bacillus licheniformis (strain ATCC 14580 / DSM 13 / JCM 2505 / CCUG 7422 / NBRC 12200 / NCIMB 9375 / NCTC 10341 / NRRL NRS-1264 / Gibson 46)).